An 888-amino-acid chain; its full sequence is 3-hydroxy-3-methylglutaryl-coenzyme A reductase (888 aa).

Over 1–9 (MLSRLFRMH) the chain is Cytoplasmic. Residues 10–39 (GLFVASHPWEVIVGTVTLTICMMSMNMFTG) form a helical membrane-spanning segment. At 40–56 (NDKICGWNYECPKFEED) the chain is on the lumenal side. The chain crosses the membrane as a helical span at residues 57–78 (VLSSDIIILTITRCIAILYIYF). The SSD domain maps to 61 to 218 (DIIILTITRC…MTFFPACVSL (158 aa)). An INSIG-binding motif motif is present at residues 75 to 78 (YIYF). Residues 79–89 (QFQNLRQLGSK) are Cytoplasmic-facing. K89 is covalently cross-linked (Glycyl lysine isopeptide (Lys-Gly) (interchain with G-Cter in ubiquitin)). The chain crosses the membrane as a helical span at residues 90–114 (YILGIAGLFTIFSSFVFSTVVIHFL). Residues 115 to 123 (DKELTGLNE) are Lumenal-facing. Residues 124–149 (ALPFFLLLIDLSRASALAKFALSSNS) form a helical membrane-spanning segment. The Cytoplasmic segment spans residues 150 to 159 (QDEVRENIAR). The chain crosses the membrane as a helical span at residues 160–187 (GMAILGPTFTLDALVECLVIGVGTMSGV). Over 188 to 191 (RQLE) the chain is Lumenal. A helical membrane pass occupies residues 192–220 (IMCCFGCMSVLANYFVFMTFFPACVSLVL). Topologically, residues 221-248 (ELSRESREGRPIWQLSHFARVLEEEENK) are cytoplasmic. Residue K248 forms a Glycyl lysine isopeptide (Lys-Gly) (interchain with G-Cter in ubiquitin) linkage. The helical transmembrane segment at 249 to 275 (PNPVTQRVKMIMSLGLVLVHAHSRWIA) threads the bilayer. Over 276-314 (DPSPQNSTADNSKVSLGLDENVSKRIEPSVSLWQFYLSK) the chain is Lumenal. N-linked (GlcNAc...) asparagine glycosylation is found at N281 and N296. The helical transmembrane segment at 315–339 (MISMDIEQVITLSLALLLAVKYIFF) threads the bilayer. Residues 340-888 (EQAETESTLS…LEGACTKKAA (549 aa)) are Cytoplasmic-facing. Catalysis depends on charge relay system residues E559, K691, and D767. The Proton donor role is filled by H866. Position 872 is a phosphoserine; by AMPK (S872).

Belongs to the HMG-CoA reductase family. In terms of assembly, homotetramer. Homodimer. Interacts (via its SSD) with INSIG1; the interaction, accelerated by sterols, leads to the recruitment of HMGCR to AMFR/gp78 for its ubiquitination by the sterol-mediated ERAD pathway. Interacts with UBIAD1. Undergoes sterol-mediated ubiquitination and ER-associated degradation (ERAD). Accumulation of sterols in the endoplasmic reticulum (ER) membrane, triggers binding of the reductase to the ER membrane protein INSIG1 or INSIG2. The INSIG1 binding leads to the recruitment of the ubiquitin ligase, AMFR/gp78, RNF139 or RNF145, initiating ubiquitination of the reductase. The ubiquitinated reductase is then extracted from the ER membrane and delivered to cytosolic 26S proteosomes by a mechanism probably mediated by the ATPase Valosin-containing protein VCP/p97. The INSIG2-binding leads to the recruitment of the ubiquitin ligase RNF139, initiating ubiquitination of the reductase. Lys-248 is the main site of ubiquitination. Ubiquitination is enhanced by the presence of a geranylgeranylated protein. In terms of processing, N-glycosylated. Deglycosylated by NGLY1 on release from the endoplasmic reticulum (ER) in a sterol-mediated manner. Post-translationally, phosphorylated. Phosphorylation at Ser-872 reduces the catalytic activity.

It localises to the endoplasmic reticulum membrane. The protein resides in the peroxisome membrane. It carries out the reaction (R)-mevalonate + 2 NADP(+) + CoA = (3S)-3-hydroxy-3-methylglutaryl-CoA + 2 NADPH + 2 H(+). The protein operates within metabolic intermediate biosynthesis; (R)-mevalonate biosynthesis; (R)-mevalonate from acetyl-CoA: step 3/3. With respect to regulation, regulated by a negative feedback mechanism through sterols and non-sterol metabolites derived from mevalonate. Phosphorylation at Ser-872 down-regulates the catalytic activity. Its function is as follows. Catalyzes the conversion of (3S)-hydroxy-3-methylglutaryl-CoA (HMG-CoA) to mevalonic acid, the rate-limiting step in the synthesis of cholesterol and other isoprenoids, thus plays a critical role in cellular cholesterol homeostasis. The chain is 3-hydroxy-3-methylglutaryl-coenzyme A reductase (HMGCR) from Oryctolagus cuniculus (Rabbit).